We begin with the raw amino-acid sequence, 288 residues long: Glutamate racemase (288 aa).

The tract at residues 1-21 (MAIARQDVNISSPEATTSDAQ) is disordered. Residues 8–21 (VNISSPEATTSDAQ) show a composition bias toward polar residues. Substrate contacts are provided by residues 32-33 (DS) and 64-65 (YG). The Proton donor/acceptor role is filled by Cys96. 97 to 98 (NT) is a binding site for substrate. Cys209 acts as the Proton donor/acceptor in catalysis. 210 to 211 (TH) provides a ligand contact to substrate.

The protein belongs to the aspartate/glutamate racemases family.

It catalyses the reaction L-glutamate = D-glutamate. Its pathway is cell wall biogenesis; peptidoglycan biosynthesis. Functionally, provides the (R)-glutamate required for cell wall biosynthesis. In Proteus mirabilis (strain HI4320), this protein is Glutamate racemase.